Consider the following 406-residue polypeptide: Nicotinate phosphoribosyltransferase (406 aa).

At H227 the chain carries Phosphohistidine; by autocatalysis.

Belongs to the NAPRTase family. Post-translationally, transiently phosphorylated on a His residue during the reaction cycle. Phosphorylation strongly increases the affinity for substrates and increases the rate of nicotinate D-ribonucleotide production. Dephosphorylation regenerates the low-affinity form of the enzyme, leading to product release.

The catalysed reaction is nicotinate + 5-phospho-alpha-D-ribose 1-diphosphate + ATP + H2O = nicotinate beta-D-ribonucleotide + ADP + phosphate + diphosphate. It functions in the pathway cofactor biosynthesis; NAD(+) biosynthesis; nicotinate D-ribonucleotide from nicotinate: step 1/1. Its function is as follows. Catalyzes the synthesis of beta-nicotinate D-ribonucleotide from nicotinate and 5-phospho-D-ribose 1-phosphate at the expense of ATP. The chain is Nicotinate phosphoribosyltransferase from Methanosarcina mazei (strain ATCC BAA-159 / DSM 3647 / Goe1 / Go1 / JCM 11833 / OCM 88) (Methanosarcina frisia).